The following is a 292-amino-acid chain: MEQYEKVEKIGEGTYGVVYKGKHRHTNETIALKKIRLEQEDEGVPSTAIREISLLKEMQHRNIVRLQDVVHKEKCIYLVFEYLDLDLKKHMDSSPDFKNHRIVKSFLYQILRGIAYCHSHRVLHRDLKPQNLLIDRRTNSLKLADFGLARAFGIPVRTFTHEVVTLWYRAPEILLGARHYSTPVDMWSVGCIFAEMVNQKPLFPGDSEIDELFKIFSIMGTPNEETWPGVASLPDYISTFPKWPSVDLATVVPTLDSSGLDLLSKMLRLDPSKRINARAALEHEYFKDLEVA.

The Protein kinase domain maps to Tyr-4–Phe-286. ATP is bound by residues Ile-10 to Val-18 and Lys-33. Phosphothreonine is present on Thr-14. Residue Tyr-15 is modified to Phosphotyrosine. The active-site Proton acceptor is the Asp-126. Thr-160 carries the post-translational modification Phosphothreonine.

It belongs to the protein kinase superfamily. CMGC Ser/Thr protein kinase family. CDC2/CDKX subfamily. As to expression, expressed in the dividing region of the root apex and in differentiated cells such as those in the sclerenchyma, pericycle and parenchyma of the central cylinder. Expressed in the intercalary meristem and the elongation zone of internodes.

It carries out the reaction L-seryl-[protein] + ATP = O-phospho-L-seryl-[protein] + ADP + H(+). The enzyme catalyses L-threonyl-[protein] + ATP = O-phospho-L-threonyl-[protein] + ADP + H(+). The catalysed reaction is [DNA-directed RNA polymerase] + ATP = phospho-[DNA-directed RNA polymerase] + ADP + H(+). In Oryza sativa subsp. japonica (Rice), this protein is Cyclin-dependent kinase A-2 (CDKA-2).